The chain runs to 234 residues: MAKLTKRMRVIRDKVDSTKQYDINEAVALLKELATAKFVESVDVAVNLGIDARKSDQNVRGATVLPHGTGRSVRVAVFAQGANAEAAKAAGAELVGMEDLADQIKKGEMNFDVVIASPDAMRVVGQLGQVLGPRGLMPNPKVGTVTPNVAEAVKNAKAGQVRYRNDKNGIIHTTIGKVDFDTDKLKENLESLLVALKKAKPSQAKGVFIKKVSLSTTMGAGVAVDQAGLNASAA.

It belongs to the universal ribosomal protein uL1 family. In terms of assembly, part of the 50S ribosomal subunit.

Functionally, binds directly to 23S rRNA. The L1 stalk is quite mobile in the ribosome, and is involved in E site tRNA release. Protein L1 is also a translational repressor protein, it controls the translation of the L11 operon by binding to its mRNA. In Erwinia tasmaniensis (strain DSM 17950 / CFBP 7177 / CIP 109463 / NCPPB 4357 / Et1/99), this protein is Large ribosomal subunit protein uL1.